Reading from the N-terminus, the 131-residue chain is Sec-independent protein translocase protein TatB (131 aa).

The chain crosses the membrane as a helical span at residues 2-22; sequence FANIGWGEMLVLVMVGLVVLG. Residues 90–131 form a disordered region; that stretch reads DSLFTGDFDRPTPKKPDAAGSAGPDATEQIGAGPIPFDSDAT. Basic and acidic residues predominate over residues 96–106; sequence DFDRPTPKKPD.

This sequence belongs to the TatB family. In terms of assembly, the Tat system comprises two distinct complexes: a TatABC complex, containing multiple copies of TatA, TatB and TatC subunits, and a separate TatA complex, containing only TatA subunits. Substrates initially bind to the TatABC complex, which probably triggers association of the separate TatA complex to form the active translocon.

It localises to the cell membrane. Part of the twin-arginine translocation (Tat) system that transports large folded proteins containing a characteristic twin-arginine motif in their signal peptide across membranes. Together with TatC, TatB is part of a receptor directly interacting with Tat signal peptides. TatB may form an oligomeric binding site that transiently accommodates folded Tat precursor proteins before their translocation. In Mycobacterium bovis (strain ATCC BAA-935 / AF2122/97), this protein is Sec-independent protein translocase protein TatB.